A 303-amino-acid polypeptide reads, in one-letter code: MISIFSKLKQSLSKTSNKISEGIDKIFYKKKLDAGTLEELEELLISSDMSVLVVTNIIEEFKKVKFDKEIDSDTVKEALAKLIEQQLSKSAIPFTLSENKLNVILVCGVNGAGKTTTIGKLASMYSAQGKKVAVAACDTFRAAAVNQLSTWADRANALLITGEESADPASVAYRGMEESIKQNIDILFIDTAGRLHNKKNLMDELSKIVKVIKKLDENAPTHSVLVIDAITGQNTYNQVEHFNDATNLTGLIVTKLDGSAKAGVIVGVVQKFNLPLYFIGIGEKIEDLKIFNQHDFARNLVGL.

GTP is bound by residues 108–115 (GVNGAGKT), 190–194 (DTAGR), and 254–257 (TKLD).

Belongs to the GTP-binding SRP family. FtsY subfamily. Part of the signal recognition particle protein translocation system, which is composed of SRP and FtsY. SRP is a ribonucleoprotein composed of Ffh and a 4.5S RNA molecule.

Its subcellular location is the cell inner membrane. It is found in the cytoplasm. It catalyses the reaction GTP + H2O = GDP + phosphate + H(+). In terms of biological role, involved in targeting and insertion of nascent membrane proteins into the cytoplasmic membrane. Acts as a receptor for the complex formed by the signal recognition particle (SRP) and the ribosome-nascent chain (RNC). Interaction with SRP-RNC leads to the transfer of the RNC complex to the Sec translocase for insertion into the membrane, the hydrolysis of GTP by both Ffh and FtsY, and the dissociation of the SRP-FtsY complex into the individual components. This is Signal recognition particle receptor FtsY from Rickettsia conorii (strain ATCC VR-613 / Malish 7).